Here is a 273-residue protein sequence, read N- to C-terminus: MGLSASSPAATAQSAAEPSKQHQVASPPSECPMHQEKMRGCPMHMKASDRRAENTDDVPAHQERAYEYVACPVKSGASQVNDDIDPSNMMPPPNQLPSPDQPFPLSTVREESSIPRAHSDKKWVYPSEQMFWNAMLRKGWRWKDDDITSEDMTNIIKIHNQNNEQAWKEILKWEALHAMECPCGPSLMRFGGKAKEYSPRARIRSWMGYELPFDRHDWIVDRCGKEVRYVIDYYDGGAVDKNYQFTILDVRPAFDSLSAVWDRMKVAWWRWTS.

A compositionally biased stretch (low complexity) spans 1–18 (MGLSASSPAATAQSAAEP). The segment at 1–39 (MGLSASSPAATAQSAAEPSKQHQVASPPSECPMHQEKMR) is disordered. 2 HRM repeats span residues 30 to 35 (ECPMHQ) and 40 to 45 (GCPMHM).

It belongs to the cytochrome c-type heme lyase family.

It is found in the mitochondrion inner membrane. The enzyme catalyses holo-[cytochrome c] = apo-[cytochrome c] + heme b. Functionally, lyase that catalyzes the covalent linking of the heme group to the cytochrome C apoprotein to produce the mature functional cytochrome. This Gallus gallus (Chicken) protein is Holocytochrome c-type synthase (HCCS).